The primary structure comprises 1309 residues: Nuclear pore complex protein NUP1 (1309 aa).

Disordered stretches follow at residues 1–58, 83–118, 173–210, 266–296, 329–348, 384–417, 467–538, 594–617, and 635–680; these read MASA…GGGW, RKRL…HKED, AADS…GSMN, RTPF…VTPR, SKWE…SGLK, ESPL…NLVP, LGNL…EEHP, SEAM…NGSL, and SNMA…VFPN. The tract at residues 2–677 is 25 X 2 AA repeats of F-G; sequence ASAARGESSN…LEEPKKPAAV (676 aa). Basic residues predominate over residues 22–32; the sequence is KFRKPTARRSQ. The segment covering 47–58 has biased composition (gly residues); sequence GLGGGDVRGGGW. Residues 91–101 show a composition bias toward polar residues; it reads TPLQSPEQQKQ. The span at 195–204 shows a compositional bias: basic and acidic residues; that stretch reads PSHERDRTHP. Residues 268–283 are compositionally biased toward polar residues; sequence PFPQKSPTMSLVTKPS. Basic and acidic residues predominate over residues 396 to 405; the sequence is KTTHTSKDSA. 2 stretches are compositionally biased toward polar residues: residues 597–617 and 635–659; these read MPST…NGSL and SNMA…SGKP. Positions 660 to 673 are enriched in basic and acidic residues; sequence TSEEKRIPLEEPKK. Repeat 1 spans residues 711 to 712; that stretch reads FG. The segment at 719–865 is disordered; the sequence is KPTESKKTFS…VKNATFGNTS (147 aa). Composition is skewed to low complexity over residues 728 to 741 and 767 to 783; these read SNSA…TSAA and SSPS…SDNS. The segment covering 789 to 803 has biased composition (polar residues); sequence STVQSFAATHNSSSI. The stretch at 804–805 is repeat 2; the sequence is FG. A compositionally biased stretch (low complexity) spans 809–827; the sequence is TSNDSNSQSTSASPLSSTS. Tandem repeats lie at residues 831-832, 861-862, 869-870, 883-884, 898-899, 927-928, 956-957, 983-984, 1004-1005, 1029-1030, 1038-1039, and 1053-1054. Residues 1004-1023 are compositionally biased toward low complexity; sequence FGAGNAQTGNTGSGTTTSTQ. Residues 1004 to 1028 form a disordered region; the sequence is FGAGNAQTGNTGSGTTTSTQSIPFQ. A compositionally biased stretch (low complexity) spans 1068 to 1086; the sequence is TPQLSSTNSSASSSSTMSS. Residues 1068–1105 form a disordered region; the sequence is TPQLSSTNSSASSSSTMSSPLFGTSWQAPNSSPNSGPV. The stretch at 1089-1090 is repeat 15; the sequence is FG. Residues 1096 to 1105 are compositionally biased toward low complexity; the sequence is PNSSPNSGPV. 10 tandem repeats follow at residues 1121–1122, 1137–1138, 1151–1152, 1153–1154, 1166–1167, 1177–1178, 1186–1187, 1224–1225, 1238–1239, and 1255–1256. A disordered region spans residues 1278-1309; it reads FQGGGSFSLGSTGGGDKSGRRIFKAKKSTRKK. Positions 1279-1293 are enriched in gly residues; it reads QGGGSFSLGSTGGGD. Positions 1297 to 1309 are enriched in basic residues; it reads RRIFKAKKSTRKK.

In terms of assembly, part of the nuclear pore complex (NPC). The NPC has an eight-fold symmetrical structure comprising a central transport channel and two rings, the cytoplasmic and nuclear rings, to which eight filaments are attached. The cytoplasmic filaments have loose ends, while the nuclear filaments are joined in a distal ring, forming a nuclear basket. NPCs are highly dynamic in configuration and composition, and can be devided in 3 subcomplexes, the NUP62 subcomplex, the NUP107-160 subcomplex and the NUP93 subcomplex, containing approximately 30 different nucleoporin proteins. Interacts with EER5, anchoring the TREX-2 complex on the nuclear pore complex. Interacts with UCH1 and UCH2.

Its subcellular location is the nucleus envelope. The protein localises to the nucleus. The protein resides in the nuclear pore complex. It is found in the cytoplasm. It localises to the cytosol. In terms of biological role, nucleoporin required for nuclear mRNA export. Functions as an adapter and/or regulator molecule in the periphery of the nuclear pore complex (NPC). May interact with importin proteins and mediate active nucleocytoplasmic transport through the NPC. Involved in regulation of nuclear morphology. This is Nuclear pore complex protein NUP1 from Arabidopsis thaliana (Mouse-ear cress).